A 634-amino-acid chain; its full sequence is Proline and serine-rich protein 3 (634 aa).

Disordered stretches follow at residues 1-69 (MFPK…LIDN), 81-142 (FRQA…TSLA), 185-242 (DASS…ATLK), 368-455 (VPPT…FEGP), and 472-534 (FPDS…TAPK). Residues 15–24 (RTGATRSQRP) show a composition bias toward polar residues. Composition is skewed to low complexity over residues 40–56 (ESWPSSSWTPSPASTTE), 128–140 (VTGPSPTGVSSTS), and 185–202 (DASSSSFPISSDGLSPSS). Residues 203 to 215 (VTFNPDSNKSSNP) show a composition bias toward polar residues. The segment covering 368 to 377 (VPPTSTSTTP) has biased composition (low complexity). Residues 378–399 (APTPTPQVCIPGPPTSAPPPCA) show a composition bias toward pro residues. The segment covering 436–448 (VSTSSHQKTTVPD) has biased composition (polar residues). Basic and acidic residues predominate over residues 503-515 (PESRRGSKTESRK). The residue at position 588 (S588) is a Phosphoserine.

The protein localises to the cytoplasm. It localises to the cytoskeleton. It is found in the microtubule organizing center. The protein resides in the centrosome. This is Proline and serine-rich protein 3 (Proser3) from Mus musculus (Mouse).